Consider the following 278-residue polypeptide: Energy-coupling factor transporter ATP-binding protein EcfA (278 aa).

Residues 4-239 form the ABC transporter domain; it reads LETRDLKYSY…SETVRSANLR (236 aa). 37 to 44 contacts ATP; that stretch reads GPNGAGKS.

Belongs to the ABC transporter superfamily. Energy-coupling factor EcfA family. In terms of assembly, forms a stable energy-coupling factor (ECF) transporter complex composed of 2 membrane-embedded substrate-binding proteins (S component), 2 ATP-binding proteins (A component) and 2 transmembrane proteins (T component).

The protein localises to the cell membrane. Functionally, ATP-binding (A) component of a common energy-coupling factor (ECF) ABC-transporter complex. Unlike classic ABC transporters this ECF transporter provides the energy necessary to transport a number of different substrates. In Methanococcus maripaludis (strain DSM 14266 / JCM 13030 / NBRC 101832 / S2 / LL), this protein is Energy-coupling factor transporter ATP-binding protein EcfA.